Here is a 171-residue protein sequence, read N- to C-terminus: Adenine phosphoribosyltransferase (171 aa).

Belongs to the purine/pyrimidine phosphoribosyltransferase family. Homodimer.

The protein resides in the cytoplasm. The catalysed reaction is AMP + diphosphate = 5-phospho-alpha-D-ribose 1-diphosphate + adenine. Its pathway is purine metabolism; AMP biosynthesis via salvage pathway; AMP from adenine: step 1/1. Functionally, catalyzes a salvage reaction resulting in the formation of AMP, that is energically less costly than de novo synthesis. The protein is Adenine phosphoribosyltransferase of Christiangramia forsetii (strain DSM 17595 / CGMCC 1.15422 / KT0803) (Gramella forsetii).